The chain runs to 422 residues: Keratin, type II cytoskeletal 80 (422 aa).

Positions 1–82 are head; sequence MACRSCVVGF…DPAIQQQKNN (82 aa). Serine 45 bears the Phosphoserine mark. The interval 83–118 is coil 1A; it reads EKEEMKVLNDKFASLIGKVQALEQRNQLLETRWHFL. Residues 83-394 enclose the IF rod domain; it reads EKEEMKVLND…KLMEGEESRM (312 aa). The segment at 119-135 is linker 1; it reads QSQDSATFDLGHLYEEY. The interval 136–227 is coil 1B; it reads QGRLQEELRK…SIYEQELKDL (92 aa). The linker 12 stretch occupies residues 228–251; that stretch reads AAQLKDVSVTVGMDSRCHIDLSGI. Residues 252-390 form a coil 2 region; the sequence is VEEVKAQYDA…ATYRKLMEGE (139 aa). A tail region spans residues 391–422; that stretch reads ESRMDMPSATVVSAVQARCRTAPTLPHPLCSL.

It belongs to the intermediate filament family. Heterotetramer of two type I and two type II keratins.

In Bos taurus (Bovine), this protein is Keratin, type II cytoskeletal 80 (KRT80).